The following is a 1404-amino-acid chain: Microtubule organization protein AKNA (1404 aa).

2 disordered regions span residues 1 to 304 and 317 to 382; these read MASS…VSPL and QHKQ…RPLI. Serine 51 carries the phosphoserine modification. The segment covering 70–91 has biased composition (acidic residues); it reads WDPDMQDSEESSGEETEADDAS. Residues 185–203 show a composition bias toward polar residues; sequence KSWSSGTVSLRQPSDSLGS. Serine 302 is subject to Phosphoserine. Phosphoserine is present on residues serine 485 and serine 520. The disordered stretch occupies residues 494–549; sequence AEWWPDPAQDPQASEATGWPFPRTDLSPSSSPGVATPGRLPQSQGIATDQPSTGQT. A compositionally biased stretch (polar residues) spans 534-549; that stretch reads PQSQGIATDQPSTGQT. Serine 617 carries the post-translational modification Phosphoserine. The span at 645–659 shows a compositional bias: basic and acidic residues; the sequence is MDQTQRETEPCRPDL. Positions 645 to 708 are disordered; sequence MDQTQRETEP…TSPGSSCTLP (64 aa). Composition is skewed to polar residues over residues 660–674 and 686–707; these read QDST…QSAH and DGQT…SCTL. Phosphoserine occurs at positions 750 and 753. A PEST region spans residues 754–787; it reads LPEALRDEDEDDLEEEEEEQDHQGPLEVDSPATA. 2 disordered regions span residues 755–1038 and 1085–1185; these read PEAL…STAN and HSTQ…RERV. Over residues 759–773 the composition is skewed to acidic residues; sequence RDEDEDDLEEEEEEQ. A compositionally biased stretch (basic and acidic residues) spans 803 to 813; it reads TQAEESHRDAT. A phosphoserine mark is found at serine 831 and serine 860. A PEST region spans residues 885–906; that stretch reads HTEEPWMVSPETDSGFVGSETS. 3 stretches are compositionally biased toward polar residues: residues 903–914, 921–933, and 963–974; these read SETSIVSPFTQT, HVST…QHLT, and SRTQQHFSSLSS. Position 971 is a phosphoserine (serine 971). Positions 1015–1029 are enriched in low complexity; sequence TSPDSAPAPTAASTP. Residues 1085 to 1098 are compositionally biased toward polar residues; that stretch reads HSTQTQEKLGSSPS. The a.T hook DNA-binding region spans 1088-1096; the sequence is QTQEKLGSS. A phosphoserine mark is found at serine 1144 and serine 1145. Basic and acidic residues predominate over residues 1155–1167; sequence SSEKSRTFEEHPE. A Phosphoserine modification is found at serine 1200. Disordered regions lie at residues 1208–1235 and 1253–1286; these read SGTP…TTRG and SAEA…QTGS. The segment covering 1221-1235 has biased composition (polar residues); sequence TQDTGSAVSRDTTRG. Phosphoserine is present on residues serine 1339, serine 1352, and serine 1389.

It belongs to the AKNA family. In terms of assembly, interacts with DCTN1. Interacts with MAPRE1/EB1. Interacts with ODF2. Interacts with CAMSAP3. Phosphorylated; phosphorylation regulates dissociation from and reassembly at the centrosome. In terms of tissue distribution, expressed in neural stem cells isolated at the peak of subventricular zone (SVZ): localizes at the subdistal appendages of the mother centriole in specific subtypes of neural stem cells and in almost all basal progenitors.

The protein resides in the cytoplasm. It is found in the cytoskeleton. It localises to the microtubule organizing center. Its subcellular location is the centrosome. The protein localises to the centriole. The protein resides in the nucleus. Centrosomal protein that plays a key role in cell delamination by regulating microtubule organization. Required for the delamination and retention of neural stem cells from the subventricular zone during neurogenesis. Also regulates the epithelial-to-mesenchymal transition in other epithelial cells. Acts by increasing centrosomal microtubule nucleation and recruiting nucleation factors and minus-end stabilizers, thereby destabilizing microtubules at the adherens junctions and mediating constriction of the apical endfoot. In addition, may also act as a transcription factor that specifically activates the expression of the CD40 receptor and its ligand CD40L/CD154, two cell surface molecules on lymphocytes that are critical for antigen-dependent-B-cell development. Binds to A/T-rich promoters. It is unclear how it can both act as a microtubule organizer and as a transcription factor; additional evidences are required to reconcile these two apparently contradictory functions. The sequence is that of Microtubule organization protein AKNA from Mus musculus (Mouse).